The sequence spans 154 residues: UPF0756 membrane protein YtwI (154 aa).

The next 4 helical transmembrane spans lie at 8-28 (FLIL…LFAV), 54-74 (WGVT…EIGF), 87-107 (WIAL…LTLL), and 117-137 (LVIG…GPLI).

The protein belongs to the UPF0756 family.

Its subcellular location is the cell membrane. This is UPF0756 membrane protein YtwI (ytwI) from Bacillus subtilis (strain 168).